A 213-amino-acid chain; its full sequence is ATP synthase subunit delta 2 (213 aa).

Belongs to the ATPase delta chain family. F-type ATPases have 2 components, F(1) - the catalytic core - and F(0) - the membrane proton channel. F(1) has five subunits: alpha(3), beta(3), gamma(1), delta(1), epsilon(1). F(0) has three main subunits: a(1), b(2) and c(10-14). The alpha and beta chains form an alternating ring which encloses part of the gamma chain. F(1) is attached to F(0) by a central stalk formed by the gamma and epsilon chains, while a peripheral stalk is formed by the delta and b chains.

Its subcellular location is the cell inner membrane. In terms of biological role, f(1)F(0) ATP synthase produces ATP from ADP in the presence of a proton or sodium gradient. F-type ATPases consist of two structural domains, F(1) containing the extramembraneous catalytic core and F(0) containing the membrane proton channel, linked together by a central stalk and a peripheral stalk. During catalysis, ATP synthesis in the catalytic domain of F(1) is coupled via a rotary mechanism of the central stalk subunits to proton translocation. Functionally, this protein is part of the stalk that links CF(0) to CF(1). It either transmits conformational changes from CF(0) to CF(1) or is implicated in proton conduction. This is ATP synthase subunit delta 2 from Brachyspira hyodysenteriae (strain ATCC 49526 / WA1).